The chain runs to 315 residues: Ribonuclease Z (315 aa).

Residues H61, H63, D65, H66, H151, D219, and H278 each contribute to the Zn(2+) site. D65 (proton acceptor) is an active-site residue.

The protein belongs to the RNase Z family. In terms of assembly, homodimer. Requires Zn(2+) as cofactor.

The catalysed reaction is Endonucleolytic cleavage of RNA, removing extra 3' nucleotides from tRNA precursor, generating 3' termini of tRNAs. A 3'-hydroxy group is left at the tRNA terminus and a 5'-phosphoryl group is left at the trailer molecule.. Functionally, zinc phosphodiesterase, which displays some tRNA 3'-processing endonuclease activity. Probably involved in tRNA maturation, by removing a 3'-trailer from precursor tRNA. This chain is Ribonuclease Z, found in Clostridium botulinum (strain Alaska E43 / Type E3).